The chain runs to 111 residues: Ribulose bisphosphate carboxylase small subunit (111 aa).

This sequence belongs to the RuBisCO small chain family. As to quaternary structure, heterohexadecamer of 8 large and 8 small subunits. The CcmM short form purifies from carboxysomes in complex with both RuBisCO subunits; a second complex with full-length CcmM and RuBisCO also includes carbonic anhydrase (CA, ccaA). RuBisCO-CcmM complexes are probably associated with the carboxysome shell. Isolated reduced and oxidized SSUL1 binds holo-RuBisCO (RbcL(8)-RbcS(8)) but not either subunit octamer alone; RuBisCO has a higher affinity for reduced SSUL1.

It localises to the carboxysome. In terms of biological role, ruBisCO catalyzes two reactions: the carboxylation of D-ribulose 1,5-bisphosphate, the primary event in carbon dioxide fixation, as well as the oxidative fragmentation of the pentose substrate in the photorespiration process. Both reactions occur simultaneously and in competition at the same active site. Its function is as follows. Beta-carboxysome assembly initiates when soluble RuBisCO aggregates is condensed into a liquid matrix in a pre-carboxysome by the RbcS-like domains of probably both CcmM58 and CcmM35. CcmN interacts with the N-terminus of CcmM58, and then recruits the CcmK2 major shell protein via CcmN's encapsulation peptide. Shell formation requires CcmK proteins and CcmO. CcmL caps the otherwise elongated carboxysome. Once fully encapsulated carboxysomes are formed, they migrate within the cell probably via interactions with the cytoskeleton. The chain is Ribulose bisphosphate carboxylase small subunit from Synechococcus elongatus (strain ATCC 33912 / PCC 7942 / FACHB-805) (Anacystis nidulans R2).